The sequence spans 217 residues: MGQKINPIGLRVGVIRDWEAKWYAEKDFASLLHEDLKIRKYIDNALQEASVSHVEIERAANRINIAIHTGKPGMVIGKGGSEIEKLRNKLNSLTNKKVHINVIEIKKVDLDAKLVAENIARQLENRASFRRVQKQAITRAMKIGAKGIKTQVSGRLGGADIARAEQYSEGTVPLHTLRADIGYAHAEADTTYGKLGVKVWIYRGEVLPTKNTSEGGK.

Residues 38 to 106 (IRKYIDNALQ…KVHINVIEIK (69 aa)) enclose the KH type-2 domain.

Belongs to the universal ribosomal protein uS3 family. Part of the 30S ribosomal subunit. Forms a tight complex with proteins S10 and S14.

In terms of biological role, binds the lower part of the 30S subunit head. Binds mRNA in the 70S ribosome, positioning it for translation. This is Small ribosomal subunit protein uS3 from Staphylococcus saprophyticus subsp. saprophyticus (strain ATCC 15305 / DSM 20229 / NCIMB 8711 / NCTC 7292 / S-41).